The chain runs to 81 residues: MADEAIKNGVLDILADLTGSDDVKKNLDLNLFETGLLDSMGTVQLLLELQSQFGVDAPVSEFDRKEWDTPNKIIAKVEQAQ.

A Carrier domain is found at 1 to 81 (MADEAIKNGV…KIIAKVEQAQ (81 aa)). Position 39 is an O-(pantetheine 4'-phosphoryl)serine (Ser-39).

The protein belongs to the DltC family. 4'-phosphopantetheine is transferred from CoA to a specific serine of apo-DCP.

It is found in the cytoplasm. The protein operates within cell wall biogenesis; lipoteichoic acid biosynthesis. Functionally, carrier protein involved in the D-alanylation of lipoteichoic acid (LTA). The loading of thioester-linked D-alanine onto DltC is catalyzed by D-alanine--D-alanyl carrier protein ligase DltA. The DltC-carried D-alanyl group is further transferred to cell membrane phosphatidylglycerol (PG) by forming an ester bond, probably catalyzed by DltD. D-alanylation of LTA plays an important role in modulating the properties of the cell wall in Gram-positive bacteria, influencing the net charge of the cell wall. This chain is D-alanyl carrier protein, found in Lacticaseibacillus rhamnosus (Lactobacillus rhamnosus).